A 200-amino-acid polypeptide reads, in one-letter code: Probable GTP-binding protein EngB (200 aa).

The 174-residue stretch at 22–195 (GKDEIAFVGR…INNICSGINY (174 aa)) folds into the EngB-type G domain. Residues 30-37 (GRSNVGKS), 57-61 (GKTRL), 75-78 (DLPG), 142-145 (TKSD), and 174-176 (FSS) contribute to the GTP site. S37 and T59 together coordinate Mg(2+).

It belongs to the TRAFAC class TrmE-Era-EngA-EngB-Septin-like GTPase superfamily. EngB GTPase family. It depends on Mg(2+) as a cofactor.

In terms of biological role, necessary for normal cell division and for the maintenance of normal septation. The protein is Probable GTP-binding protein EngB of Clostridium acetobutylicum (strain ATCC 824 / DSM 792 / JCM 1419 / IAM 19013 / LMG 5710 / NBRC 13948 / NRRL B-527 / VKM B-1787 / 2291 / W).